A 74-amino-acid polypeptide reads, in one-letter code: Conotoxin AbVII (74 aa).

The signal sequence occupies residues 1–17 (VLIIAVLFLTACQLTTA). Positions 18–40 (ETSSRGKQKHRALRSTDKNSRMT) are excised as a propeptide. Residues 19–41 (TSSRGKQKHRALRSTDKNSRMTK) form a disordered region. 3 disulfides stabilise this stretch: C43/C57, C50/C61, and C56/C68.

The protein belongs to the conotoxin O1 superfamily. In terms of tissue distribution, expressed by the venom duct.

The protein localises to the secreted. The sequence is that of Conotoxin AbVII from Conus abbreviatus (Abbreviated cone).